The sequence spans 309 residues: Acetyl-coenzyme A carboxylase carboxyl transferase subunit beta (309 aa).

Residues 27-296 (LWKKCPKCGA…PGTEAPIEFE (270 aa)) form the CoA carboxyltransferase N-terminal domain. Positions 31, 34, 50, and 53 each coordinate Zn(2+). The C4-type zinc finger occupies 31 to 53 (CPKCGAFLYKPELEKNLDVCPKC). The segment at 288–309 (GTEAPIEFEVTEKPDVDEPEGQ) is disordered.

It belongs to the AccD/PCCB family. As to quaternary structure, acetyl-CoA carboxylase is a heterohexamer composed of biotin carboxyl carrier protein (AccB), biotin carboxylase (AccC) and two subunits each of ACCase subunit alpha (AccA) and ACCase subunit beta (AccD). The cofactor is Zn(2+).

The protein resides in the cytoplasm. The enzyme catalyses N(6)-carboxybiotinyl-L-lysyl-[protein] + acetyl-CoA = N(6)-biotinyl-L-lysyl-[protein] + malonyl-CoA. The protein operates within lipid metabolism; malonyl-CoA biosynthesis; malonyl-CoA from acetyl-CoA: step 1/1. In terms of biological role, component of the acetyl coenzyme A carboxylase (ACC) complex. Biotin carboxylase (BC) catalyzes the carboxylation of biotin on its carrier protein (BCCP) and then the CO(2) group is transferred by the transcarboxylase to acetyl-CoA to form malonyl-CoA. This Marinobacter nauticus (strain ATCC 700491 / DSM 11845 / VT8) (Marinobacter aquaeolei) protein is Acetyl-coenzyme A carboxylase carboxyl transferase subunit beta.